The chain runs to 313 residues: Peptidyl-prolyl cis-trans isomerase 9 (313 aa).

One can recognise a PPIase cyclophilin-type domain in the interval phenylalanine 9–glutamate 174. Basic and acidic residues-rich tracts occupy residues glutamate 216–arginine 230 and arginine 253–phenylalanine 269. 2 disordered regions span residues glutamate 216 to arginine 274 and threonine 288 to proline 313.

It belongs to the cyclophilin-type PPIase family.

It carries out the reaction [protein]-peptidylproline (omega=180) = [protein]-peptidylproline (omega=0). Its function is as follows. PPIases accelerate the folding of proteins. It catalyzes the cis-trans isomerization of proline imid ic peptide bonds in oligopeptides. Thought to function as a catalyst in the folding and modification of cuticle collagens. In Caenorhabditis briggsae, this protein is Peptidyl-prolyl cis-trans isomerase 9.